The sequence spans 351 residues: D-alanine--D-alanine ligase (351 aa).

Positions 135–343 constitute an ATP-grasp domain; sequence NQIFLQSGQK…MEEVFSDLIE (209 aa). 167–222 provides a ligand contact to ATP; that stretch reads LETLGFPQFLKPVEGGSSVSVYKITNREQLKEKLALIFESDSKVMSQSFLTGIEVS. Residues D298, E310, and N312 each contribute to the Mg(2+) site.

The protein belongs to the D-alanine--D-alanine ligase family. Mg(2+) is required as a cofactor. The cofactor is Mn(2+).

The protein localises to the cytoplasm. It catalyses the reaction 2 D-alanine + ATP = D-alanyl-D-alanine + ADP + phosphate + H(+). Its pathway is cell wall biogenesis; peptidoglycan biosynthesis. Its function is as follows. Cell wall formation. The polypeptide is D-alanine--D-alanine ligase (Leptospira interrogans serogroup Icterohaemorrhagiae serovar Lai (strain 56601)).